A 422-amino-acid chain; its full sequence is MNERLNLADLKAKTPADLLAMAEEWEIENAPSMRKGEMMFSILKEHAEEGYEVGGDGVLEVLQDGFGFLRSPEANYLPGPDDIYVSPEILRQFSLRTGDTIEGVIVAPRENERYFSLTRVTKINFDDPERARHKVHFDNLTPLYPDERLKMEVDDPTMKDRSARIIDLVAPIGKGQRGLIVAPPRTGKTVLLQNIAHSIATNHPECYLIVLLIDERPEEVTDMQRSVKGEVVSSTFDEPATRHVAVAEMVIEKAKRLVEHKRDVVILLDSITRLGRAFNTVVPSSGKVLTGGVDANALQRPKRFFGAARNIEEGGSLTIIATALIDTGSRMDEVIFEEFKGTGNSEIVLDRKVADKRVFPAMDILKSGTRKEDLLVDKSDLQKTYVLRRILNPMGTTDAIEFLISKLRQTKSNAEFFDSMNT.

The Rho RNA-BD domain occupies 52-127 (EVGGDGVLEV…TRVTKINFDD (76 aa)). ATP-binding positions include 173-178 (GKGQRG), 185-190 (RTGKTV), and Arg216.

The protein belongs to the Rho family. As to quaternary structure, homohexamer. The homohexamer assembles into an open ring structure.

Its function is as follows. Facilitates transcription termination by a mechanism that involves Rho binding to the nascent RNA, activation of Rho's RNA-dependent ATPase activity, and release of the mRNA from the DNA template. In Cereibacter sphaeroides (strain ATCC 17023 / DSM 158 / JCM 6121 / CCUG 31486 / LMG 2827 / NBRC 12203 / NCIMB 8253 / ATH 2.4.1.) (Rhodobacter sphaeroides), this protein is Transcription termination factor Rho.